The sequence spans 348 residues: Protein RecA (348 aa).

ATP is bound at residue 67-74 (GPESSGKT).

This sequence belongs to the RecA family.

Its subcellular location is the cytoplasm. Its function is as follows. Can catalyze the hydrolysis of ATP in the presence of single-stranded DNA, the ATP-dependent uptake of single-stranded DNA by duplex DNA, and the ATP-dependent hybridization of homologous single-stranded DNAs. It interacts with LexA causing its activation and leading to its autocatalytic cleavage. This chain is Protein RecA, found in Amycolatopsis mediterranei (strain U-32).